Reading from the N-terminus, the 480-residue chain is Vacuolar amino acid transporter 2 (480 aa).

Residues 21–48 form a disordered region; that stretch reads LTNFPFPGTTDNDSDDGSQGQNSLNIIT. The segment covering 37 to 46 has biased composition (polar residues); the sequence is GSQGQNSLNI. The next 9 helical transmembrane spans lie at 72–92, 95–115, 145–165, 214–234, 263–283, 297–317, 338–358, 394–414, and 447–467; these read AFMN…PFAI, AGIL…DWTL, LILF…CIII, LSKA…TVVI, LSVI…FFSM, ISII…FAVF, IARL…IFVL, VFIT…FELI, and FYLC…QTII.

The protein belongs to the amino acid/polyamine transporter 2 family.

The protein resides in the vacuole membrane. Its function is as follows. Probable amino acid transporter of unknown specificity. The sequence is that of Vacuolar amino acid transporter 2 (AVT2) from Saccharomyces cerevisiae (strain ATCC 204508 / S288c) (Baker's yeast).